A 272-amino-acid polypeptide reads, in one-letter code: Glutamate racemase (272 aa).

Substrate contacts are provided by residues 13 to 14 (DS) and 45 to 46 (YG). Cysteine 76 functions as the Proton donor/acceptor in the catalytic mechanism. Substrate is bound at residue 77-78 (NT). Cysteine 187 functions as the Proton donor/acceptor in the catalytic mechanism. A substrate-binding site is contributed by 188–189 (TH).

Belongs to the aspartate/glutamate racemases family.

The enzyme catalyses L-glutamate = D-glutamate. It functions in the pathway cell wall biogenesis; peptidoglycan biosynthesis. In terms of biological role, provides the (R)-glutamate required for cell wall biosynthesis. In Roseiflexus sp. (strain RS-1), this protein is Glutamate racemase.